A 1053-amino-acid polypeptide reads, in one-letter code: Zinc finger and BTB domain-containing protein 11 (1053 aa).

Positions 141–156 (LDLESGEESNESEDDL) are enriched in acidic residues. The tract at residues 141-173 (LDLESGEESNESEDDLSNFTSSPTTASKPAKKK) is disordered. Positions 157 to 168 (SNFTSSPTTASK) are enriched in low complexity. The 69-residue stretch at 214-282 (CDVTLLIEGE…AYTSVLSFDF (69 aa)) folds into the BTB domain. Residues 546-566 (LVQRGKKMKQPKRDAKENTEE) form a disordered region. The segment covering 556–566 (PKRDAKENTEE) has biased composition (basic and acidic residues). 2 C2H2-type zinc fingers span residues 569–591 (HKCG…KLKH) and 597–619 (YKCP…LIRH). The disordered stretch occupies residues 619–643 (HTRKDAPSSSSSNSTSNEASGTSSE). The span at 626–642 (SSSSSNSTSNEASGTSS) shows a compositional bias: low complexity. C2H2-type zinc fingers lie at residues 651 to 673 (FICS…MLKH), 679 to 701 (HACQ…QSLH), 707 to 729 (FQCE…MSIH), 735 to 757 (YLCS…FKKH), 766 to 788 (YHCT…MNKH), 794 to 816 (FQCQ…VKSH), 822 to 846 (YRCN…KATH), 858 to 880 (RVCE…MNNH), 886 to 908 (FECL…VRTH), and 914 to 937 (YVCP…TKFH). Residue Lys-1043 forms a Glycyl lysine isopeptide (Lys-Gly) (interchain with G-Cter in SUMO2) linkage. Ser-1050 is subject to Phosphoserine.

It localises to the nucleus. The protein resides in the nucleolus. May be involved in transcriptional regulation. This is Zinc finger and BTB domain-containing protein 11 from Homo sapiens (Human).